The sequence spans 146 residues: Large-conductance mechanosensitive channel (146 aa).

2 consecutive transmembrane segments (helical) span residues 15–35 (VSLA…TSLV) and 81–101 (GIFI…FIII).

The protein belongs to the MscL family. Homopentamer.

The protein localises to the cell membrane. Functionally, channel that opens in response to stretch forces in the membrane lipid bilayer. May participate in the regulation of osmotic pressure changes within the cell. The chain is Large-conductance mechanosensitive channel from Clostridium beijerinckii (strain ATCC 51743 / NCIMB 8052) (Clostridium acetobutylicum).